A 176-amino-acid polypeptide reads, in one-letter code: Non-specific lipid transfer protein GPI-anchored 12 (176 aa).

Residues 1 to 20 (MLTTNTLAVLLLLFLSLCSG) form the signal peptide. 4 cysteine pairs are disulfide-bonded: cysteine 40/cysteine 83, cysteine 50/cysteine 67, cysteine 68/cysteine 110, and cysteine 81/cysteine 120. N-linked (GlcNAc...) asparagine glycosylation occurs at asparagine 46. A lipid anchor (GPI-anchor amidated asparagine) is attached at asparagine 149. Residues 150–176 (GAMTTKYCGVALNSLALLLLFTFLSLS) constitute a propeptide, removed in mature form.

It belongs to the plant LTP family. Preferentially expressed in the endodermis of hypocotyls and roots of seedlings, and in petals and anthers of inflorescences. May also be expressed in siliques, carpels and pedicels.

It localises to the cell membrane. Functionally, probable lipid transfer protein. In Arabidopsis thaliana (Mouse-ear cress), this protein is Non-specific lipid transfer protein GPI-anchored 12.